Consider the following 260-residue polypeptide: UPF0294 protein YE0917 (260 aa).

Belongs to the UPF0294 family.

The protein resides in the cytoplasm. This chain is UPF0294 protein YE0917, found in Yersinia enterocolitica serotype O:8 / biotype 1B (strain NCTC 13174 / 8081).